We begin with the raw amino-acid sequence, 332 residues long: Fructose-1,6-bisphosphatase class 1 (332 aa).

Mg(2+) is bound by residues E89, D110, L112, and D113. Substrate-binding positions include 113-116, N206, Y239, 257-259, and K269; these read DGSS and YLY. Residue E275 coordinates Mg(2+).

The protein belongs to the FBPase class 1 family. As to quaternary structure, homotetramer. It depends on Mg(2+) as a cofactor.

The protein localises to the cytoplasm. It catalyses the reaction beta-D-fructose 1,6-bisphosphate + H2O = beta-D-fructose 6-phosphate + phosphate. It participates in carbohydrate biosynthesis; gluconeogenesis. In Cronobacter sakazakii (strain ATCC BAA-894) (Enterobacter sakazakii), this protein is Fructose-1,6-bisphosphatase class 1.